The sequence spans 313 residues: tRNA dimethylallyltransferase (313 aa).

Residue Gly14 to Thr21 participates in ATP binding. Thr16 to Thr21 provides a ligand contact to substrate. Interaction with substrate tRNA stretches follow at residues Asp39–Leu42 and Gln163–Arg167.

The protein belongs to the IPP transferase family. As to quaternary structure, monomer. It depends on Mg(2+) as a cofactor.

The enzyme catalyses adenosine(37) in tRNA + dimethylallyl diphosphate = N(6)-dimethylallyladenosine(37) in tRNA + diphosphate. Catalyzes the transfer of a dimethylallyl group onto the adenine at position 37 in tRNAs that read codons beginning with uridine, leading to the formation of N6-(dimethylallyl)adenosine (i(6)A). The sequence is that of tRNA dimethylallyltransferase from Thiobacillus denitrificans (strain ATCC 25259 / T1).